The chain runs to 314 residues: Probable 5-dehydro-4-deoxyglucarate dehydratase (314 aa).

The protein belongs to the DapA family.

It carries out the reaction 5-dehydro-4-deoxy-D-glucarate + H(+) = 2,5-dioxopentanoate + CO2 + H2O. The protein operates within carbohydrate acid metabolism; D-glucarate degradation; 2,5-dioxopentanoate from D-glucarate: step 2/2. In Bradyrhizobium diazoefficiens (strain JCM 10833 / BCRC 13528 / IAM 13628 / NBRC 14792 / USDA 110), this protein is Probable 5-dehydro-4-deoxyglucarate dehydratase.